The primary structure comprises 716 residues: MMARAAKSKPLRDVAELTKAQAKVELMRLALELEGHDKRYYQDDAPTVTDAEYDALRQRFNAIEKRFPEFVSAESPSQKVGAAPSGRFRKVRHAVPMLSLDNAFAEEDVRDFVGRIVRFLKLDDDKIDFSAEPKIDGLSMSLRYEGGELVTAATRGDGAEGEDVTANIRTLEDVPQKLKGRNVPDICEVRGEVYMTKKAFLALNERQKAAGDTIFANPRNSAAGSLRQKDPTITASRPLGFFAYAWGEMSAMPEETQTGMIHWFERCGFKTNPLTRLCHSVEELIAFHQRIEEERAELDYDIDGVVYKVDRIDWQERLGFVSRTPRWGIAHKFPAEQAMTVLRDIEIQVGRTGSFTPVGKLEPVGVGGVIVQNVTLHNEDYIKGIGNKGEVLREGRDIRIGDTVVIQRAGDVIPQVVDVVLDKRPKTAKEFHFPKTCPCPLHTDVTREETAAGEEGSRARCTGEFACPYQKIEHLKLFVSRRAFDIDGLGEKQLQYFFDEGFVKEPADIFTLEKRNAKLKLEEIEGYGATSVRNLFAAIESRRRIALERFVYALGMRHVGETTALALARGYGSWEAFHDACLKVAKGDEEAMADMDALDQIGDTVIKSIADYFGESHNRGIVERLTKEVEIVDAEKPKSNSAVAGKTVVFTGSLEKMTRDEAKATAERLGAKVSGSVSKKTDLVVAGPGAGSKLAEANKHGVKVLTEDEWLKLIGE.

Residues Asp-50–Asp-54, Ser-99–Leu-100, and Glu-132 contribute to the NAD(+) site. Lys-134 serves as the catalytic N6-AMP-lysine intermediate. Arg-155, Glu-192, Lys-308, and Lys-332 together coordinate NAD(+). Zn(2+) is bound by residues Cys-437, Cys-439, Cys-461, and Cys-467. The region spanning Lys-638–Glu-716 is the BRCT domain.

This sequence belongs to the NAD-dependent DNA ligase family. LigA subfamily. Requires Mg(2+) as cofactor. Mn(2+) serves as cofactor.

It carries out the reaction NAD(+) + (deoxyribonucleotide)n-3'-hydroxyl + 5'-phospho-(deoxyribonucleotide)m = (deoxyribonucleotide)n+m + AMP + beta-nicotinamide D-nucleotide.. Functionally, DNA ligase that catalyzes the formation of phosphodiester linkages between 5'-phosphoryl and 3'-hydroxyl groups in double-stranded DNA using NAD as a coenzyme and as the energy source for the reaction. It is essential for DNA replication and repair of damaged DNA. The polypeptide is DNA ligase (Bradyrhizobium diazoefficiens (strain JCM 10833 / BCRC 13528 / IAM 13628 / NBRC 14792 / USDA 110)).